Here is a 584-residue protein sequence, read N- to C-terminus: MGKKKNNSSNAAHVLESSVAPILELNFTDPLFTTAAHPTKPLLISGFATGHLYCNSYNGEKLEELEQVNREKAIERQQKAYEAGTITHVNKSVSQLKSKWWTTFNDIKDVPSKGEELVNVQTNWKTKRHKGSCRHAIFDPRTDCLGDYLYTCGTDNIIKKAATETGKVVGKVDVVADYSSAKDKLTKLCHSTTHPFLLSGTEDGHVLVYDSSNLGGTNKIKFKVELAHDDSINHILSMPAVSPYHYLTLGSTTLSHIDIRKGIITQSDDQEDELLAMSYTTDELSENKNDTVLVSHGEGIITIWKNSKNKLADQLTRIKVNKTASIDAIVPTMNNDDENGMASSVWCGDSEGLLHRVNYKRGRVVETRLHSVARGKSDAVDEVGVLDIDYDYRLISAGMDSLKIWSNRYSDDQEEEEEEEEEEEEEEDSVSGTDSGSDEESFSDISSVDFDSENNDDGEELLDKEQWEDVEDEDIPVGTDGSTRNEENKDNTKSEYILPFKRKRRDFSEVITKPKKKLIDINKLTKPSKKEDDGDDNNKSLQEQEKAEEVPQFKKQKVKEKKVTAKQLRNMQKHEHGIRKFEGL.

4 WD repeats span residues 128–173 (RHKG…GKVD), 180–219 (SAKDKLTKLCHSTTHPFLLSGTEDGHVLVYDSSNLGGTNK), 269–314 (DQED…LADQ), and 378–415 (DAVDEVGVLDIDYDYRLISAGMDSLKIWSNRYSDDQEE). 2 disordered regions span residues 409-497 (YSDD…SEYI) and 516-563 (KKLI…EKKV). Composition is skewed to acidic residues over residues 412-429 (DQEEEEEEEEEEEEEEDS) and 450-460 (FDSENNDDGEE). Basic and acidic residues-rich tracts occupy residues 483–493 (TRNEENKDNTK) and 528–552 (SKKEDDGDDNNKSLQEQEKAEEVPQ).

This sequence belongs to the WD repeat WDR55 family.

Its subcellular location is the nucleus. The protein resides in the nucleolus. The chain is WD repeat-containing protein JIP5 (JIP5) from Lodderomyces elongisporus (strain ATCC 11503 / CBS 2605 / JCM 1781 / NBRC 1676 / NRRL YB-4239) (Yeast).